A 373-amino-acid chain; its full sequence is Queuine tRNA-ribosyltransferase (373 aa).

Catalysis depends on aspartate 89, which acts as the Proton acceptor. Residues 89–93 (DSGGF), aspartate 143, glutamine 187, and glycine 214 each bind substrate. Positions 245–251 (GVGKPED) are RNA binding. Catalysis depends on aspartate 264, which acts as the Nucleophile. Residues 269 to 273 (TRNAR) form an RNA binding; important for wobble base 34 recognition region. Zn(2+) is bound by residues cysteine 302, cysteine 304, cysteine 307, and histidine 333.

Belongs to the queuine tRNA-ribosyltransferase family. As to quaternary structure, homodimer. Within each dimer, one monomer is responsible for RNA recognition and catalysis, while the other monomer binds to the replacement base PreQ1. Zn(2+) is required as a cofactor.

It catalyses the reaction 7-aminomethyl-7-carbaguanine + guanosine(34) in tRNA = 7-aminomethyl-7-carbaguanosine(34) in tRNA + guanine. It participates in tRNA modification; tRNA-queuosine biosynthesis. Functionally, catalyzes the base-exchange of a guanine (G) residue with the queuine precursor 7-aminomethyl-7-deazaguanine (PreQ1) at position 34 (anticodon wobble position) in tRNAs with GU(N) anticodons (tRNA-Asp, -Asn, -His and -Tyr). Catalysis occurs through a double-displacement mechanism. The nucleophile active site attacks the C1' of nucleotide 34 to detach the guanine base from the RNA, forming a covalent enzyme-RNA intermediate. The proton acceptor active site deprotonates the incoming PreQ1, allowing a nucleophilic attack on the C1' of the ribose to form the product. After dissociation, two additional enzymatic reactions on the tRNA convert PreQ1 to queuine (Q), resulting in the hypermodified nucleoside queuosine (7-(((4,5-cis-dihydroxy-2-cyclopenten-1-yl)amino)methyl)-7-deazaguanosine). The chain is Queuine tRNA-ribosyltransferase from Tolumonas auensis (strain DSM 9187 / NBRC 110442 / TA 4).